A 94-amino-acid chain; its full sequence is Small ribosomal subunit protein bS6 (94 aa).

Belongs to the bacterial ribosomal protein bS6 family.

Its function is as follows. Binds together with bS18 to 16S ribosomal RNA. The polypeptide is Small ribosomal subunit protein bS6 (Clostridium botulinum (strain 657 / Type Ba4)).